The following is a 209-amino-acid chain: Large ribosomal subunit protein bL25 (209 aa).

The interval 185–209 is disordered; sequence SKATTGEEEGAEAAGEGEEAEEKPE. Positions 190–209 are enriched in acidic residues; the sequence is GEEEGAEAAGEGEEAEEKPE.

It belongs to the bacterial ribosomal protein bL25 family. CTC subfamily. In terms of assembly, part of the 50S ribosomal subunit; part of the 5S rRNA/L5/L18/L25 subcomplex. Contacts the 5S rRNA. Binds to the 5S rRNA independently of L5 and L18.

This is one of the proteins that binds to the 5S RNA in the ribosome where it forms part of the central protuberance. This Syntrophomonas wolfei subsp. wolfei (strain DSM 2245B / Goettingen) protein is Large ribosomal subunit protein bL25.